The chain runs to 306 residues: Pantothenate synthetase (306 aa).

37–44 (MGALHEGH) contacts ATP. Catalysis depends on His-44, which acts as the Proton donor. A (R)-pantoate-binding site is contributed by Gln-69. Gln-69 serves as a coordination point for beta-alanine. 155–158 (GEKD) contributes to the ATP binding site. (R)-pantoate is bound at residue Gln-161. Residues Val-184 and 192-195 (KSSR) each bind ATP.

It belongs to the pantothenate synthetase family. As to quaternary structure, homodimer.

It is found in the cytoplasm. The enzyme catalyses (R)-pantoate + beta-alanine + ATP = (R)-pantothenate + AMP + diphosphate + H(+). Its pathway is cofactor biosynthesis; (R)-pantothenate biosynthesis; (R)-pantothenate from (R)-pantoate and beta-alanine: step 1/1. Functionally, catalyzes the condensation of pantoate with beta-alanine in an ATP-dependent reaction via a pantoyl-adenylate intermediate. The protein is Pantothenate synthetase of Corynebacterium jeikeium (strain K411).